The primary structure comprises 168 residues: Protein B-Myc (168 aa).

2 disordered regions span residues 26–94 (DDEE…DLPE) and 146–168 (EGAS…TCNT). Phosphoserine is present on residues Ser-59 and Ser-67.

It localises to the nucleus. In terms of biological role, seems to act as an inhibitor of cellular proliferation. The sequence is that of Protein B-Myc (Mycb) from Rattus norvegicus (Rat).